Here is a 661-residue protein sequence, read N- to C-terminus: PAN2-PAN3 deadenylation complex subunit pan3 (661 aa).

Disordered stretches follow at residues 1 to 29 and 53 to 131; these read MASVGKPSLEDARRGTGSPKMKARENAKD and DPHK…RQDA. The C3H1-type zinc finger occupies 26 to 55; sequence NAKDTLCRNVTIYGRCRYEDKGCAFNHDPH. A PABPC-interacting motif-2 (PAM-2) motif is present at residues 63–83; sequence NASKKRFNVDSPSFTPSLLPS. The span at 77–104 shows a compositional bias: low complexity; the sequence is TPSLLPSNGSSPTSSSSSLKKSSTISPK. Positions 115-126 are enriched in polar residues; sequence TAASRSNTSTPG. Residues 263–524 are pseudokinase domain; it reads QTLPNTQLPA…NIDILINGIS (262 aa). ATP-binding positions include arginine 315, 364-371, and 424-425; these read DYHPLSKT and SK. A coiled-coil region spans residues 525 to 563; the sequence is SQLMSTFDSALHLDDQLTSDLGRELENGRLVRLLTKLNF. Residues 564–661 are knob domain; it reads INERPEHEHD…ALLRPSRRPH (98 aa).

Belongs to the protein kinase superfamily. PAN3 family. Homodimer. Forms a heterotrimer with a catalytic subunit pan2 to form the poly(a)-nuclease (PAN) deadenylation complex. Interacts (via PAM-2 motif) with poly(A)-binding protein pab1 (via PABC domain), conferring substrate specificity of the enzyme complex.

The protein resides in the cytoplasm. Its function is as follows. Regulatory subunit of the poly(A)-nuclease (PAN) deadenylation complex, one of two cytoplasmic mRNA deadenylases involved in mRNA turnover. PAN specifically shortens poly(A) tails of RNA and the activity is stimulated by poly(A)-binding protein pab1. PAN deadenylation is followed by rapid degradation of the shortened mRNA tails by the CCR4-NOT complex. Deadenylated mRNAs are then degraded by two alternative mechanisms, namely exosome-mediated 3'-5' exonucleolytic degradation, or deadenylation-dependent mRNA decaping and subsequent 5'-3' exonucleolytic degradation by XRN1. May also be involved in post-transcriptional maturation of mRNA poly(A) tails. pan3 acts as a positive regulator for PAN activity, recruiting the catalytic subunit pan2 to mRNA via its interaction with RNA and with pab1. The protein is PAN2-PAN3 deadenylation complex subunit pan3 of Emericella nidulans (strain FGSC A4 / ATCC 38163 / CBS 112.46 / NRRL 194 / M139) (Aspergillus nidulans).